The chain runs to 253 residues: Tryptophan synthase alpha chain (253 aa).

Active-site proton acceptor residues include E45 and D56.

It belongs to the TrpA family. As to quaternary structure, tetramer of two alpha and two beta chains.

It catalyses the reaction (1S,2R)-1-C-(indol-3-yl)glycerol 3-phosphate + L-serine = D-glyceraldehyde 3-phosphate + L-tryptophan + H2O. Its pathway is amino-acid biosynthesis; L-tryptophan biosynthesis; L-tryptophan from chorismate: step 5/5. Functionally, the alpha subunit is responsible for the aldol cleavage of indoleglycerol phosphate to indole and glyceraldehyde 3-phosphate. This is Tryptophan synthase alpha chain from Flavobacterium johnsoniae (strain ATCC 17061 / DSM 2064 / JCM 8514 / BCRC 14874 / CCUG 350202 / NBRC 14942 / NCIMB 11054 / UW101) (Cytophaga johnsonae).